Reading from the N-terminus, the 88-residue chain is Small ribosomal subunit protein uS17 (88 aa).

It belongs to the universal ribosomal protein uS17 family. Part of the 30S ribosomal subunit.

In terms of biological role, one of the primary rRNA binding proteins, it binds specifically to the 5'-end of 16S ribosomal RNA. In Brevibacillus brevis (strain 47 / JCM 6285 / NBRC 100599), this protein is Small ribosomal subunit protein uS17.